We begin with the raw amino-acid sequence, 298 residues long: Ribosomal protein L11 methyltransferase (298 aa).

S-adenosyl-L-methionine is bound by residues Thr-148, Gly-169, Asp-191, and Asn-233.

This sequence belongs to the methyltransferase superfamily. PrmA family.

The protein resides in the cytoplasm. It catalyses the reaction L-lysyl-[protein] + 3 S-adenosyl-L-methionine = N(6),N(6),N(6)-trimethyl-L-lysyl-[protein] + 3 S-adenosyl-L-homocysteine + 3 H(+). Its function is as follows. Methylates ribosomal protein L11. The sequence is that of Ribosomal protein L11 methyltransferase from Marinobacter nauticus (strain ATCC 700491 / DSM 11845 / VT8) (Marinobacter aquaeolei).